The primary structure comprises 323 residues: tRNA U34 carboxymethyltransferase (323 aa).

Carboxy-S-adenosyl-L-methionine-binding positions include Lys-91, Trp-105, Lys-110, Gly-130, 152–154, 181–182, Met-196, Tyr-200, and Arg-315; these read DPT and IE.

Belongs to the class I-like SAM-binding methyltransferase superfamily. CmoB family. In terms of assembly, homotetramer.

It carries out the reaction carboxy-S-adenosyl-L-methionine + 5-hydroxyuridine(34) in tRNA = 5-carboxymethoxyuridine(34) in tRNA + S-adenosyl-L-homocysteine + H(+). In terms of biological role, catalyzes carboxymethyl transfer from carboxy-S-adenosyl-L-methionine (Cx-SAM) to 5-hydroxyuridine (ho5U) to form 5-carboxymethoxyuridine (cmo5U) at position 34 in tRNAs. The protein is tRNA U34 carboxymethyltransferase of Escherichia coli O81 (strain ED1a).